We begin with the raw amino-acid sequence, 88 residues long: UPF0297 protein Bcer98_3100 (88 aa).

The protein belongs to the UPF0297 family.

This Bacillus cytotoxicus (strain DSM 22905 / CIP 110041 / 391-98 / NVH 391-98) protein is UPF0297 protein Bcer98_3100.